Reading from the N-terminus, the 382-residue chain is UDP-4-amino-4-deoxy-L-arabinose--oxoglutarate aminotransferase (382 aa).

An N6-(pyridoxal phosphate)lysine modification is found at K182.

Belongs to the DegT/DnrJ/EryC1 family. ArnB subfamily. In terms of assembly, homodimer. Pyridoxal 5'-phosphate is required as a cofactor.

The catalysed reaction is UDP-4-amino-4-deoxy-beta-L-arabinose + 2-oxoglutarate = UDP-beta-L-threo-pentopyranos-4-ulose + L-glutamate. Its pathway is nucleotide-sugar biosynthesis; UDP-4-deoxy-4-formamido-beta-L-arabinose biosynthesis; UDP-4-deoxy-4-formamido-beta-L-arabinose from UDP-alpha-D-glucuronate: step 2/3. The protein operates within bacterial outer membrane biogenesis; lipopolysaccharide biosynthesis. Functionally, catalyzes the conversion of UDP-4-keto-arabinose (UDP-Ara4O) to UDP-4-amino-4-deoxy-L-arabinose (UDP-L-Ara4N). The modified arabinose is attached to lipid A and is required for resistance to polymyxin and cationic antimicrobial peptides. The protein is UDP-4-amino-4-deoxy-L-arabinose--oxoglutarate aminotransferase of Pectobacterium atrosepticum (strain SCRI 1043 / ATCC BAA-672) (Erwinia carotovora subsp. atroseptica).